A 235-amino-acid chain; its full sequence is MRRFLLNVILVLAIVLFLRYVHYSLEPEPSNQPDTYSNFSSLAENESPADYDISYNEKKGSKVLIMSPHGGRIEGGVSELVRYFNNEYSTYLFEGLKSHDNQTLHITSTNFDEPLAKKKIKEHQYVVAFHGYKGENKNTLVGGTDRKRAKMIVRALERRGFSAELASSKSGLAGLNAENINNQGETGLSIQLEISREQREAFFDDFYYKNRKYTKNSEFYAYVSAIKGVLEKEYS.

The helical transmembrane segment at 5 to 24 threads the bilayer; the sequence is LLNVILVLAIVLFLRYVHYS.

Belongs to the UPF0714 family.

Its subcellular location is the cell membrane. This chain is UPF0714 protein YmaC (ymaC), found in Bacillus subtilis (strain 168).